The following is a 313-amino-acid chain: Flagellin (313 aa).

Coiled-coil stretches lie at residues 5–33 (INTNDSALLAQNNLTKSKGILGSAIERLS) and 97–117 (VQSENGSNSKSDLDSIQKEVT). 4 tandem repeats follow at residues 179–197 (KEAVAAKPAVPAQPAVPAD), 199–217 (KNGVAAKPAVPAQPEVKAQ), 255–259 (VNNLN), and 262–266 (VNNLS). The tract at residues 179 to 217 (KEAVAAKPAVPAQPAVPADPKNGVAAKPAVPAQPEVKAQ) is 2 X 19 AA approximate tandem repeats. Residues 190–199 (AQPAVPADPK) show a composition bias toward low complexity. Residues 190-211 (AQPAVPADPKNGVAAKPAVPAQ) are disordered. The stretch at 252–298 (ESTVNNLNNTVNNLSAARSRIEDADYAVEVSNMSRGQILQQAGTSVL) forms a coiled coil. Residues 255 to 266 (VNNLNNTVNNLS) are 2 X 5 AA approximate repeats of V-N-N-L-N.

This sequence belongs to the bacterial flagellin family.

Its subcellular location is the secreted. It is found in the bacterial flagellum. Flagellin is the subunit protein which polymerizes to form the filaments of bacterial flagella. The protein is Flagellin (fliC) of Xenorhabdus nematophila (Achromobacter nematophilus).